A 335-amino-acid chain; its full sequence is Protein BRASSINAZOLE-RESISTANT 2 (335 aa).

A compositionally biased stretch (low complexity) spans methionine 1–alanine 19. Disordered regions lie at residues methionine 1 to arginine 40, threonine 85 to proline 122, and proline 164 to proline 190. A required for DNA-binding region spans residues arginine 22–arginine 103. The segment covering glycine 99–aspartate 120 has biased composition (polar residues). The residue at position 175 (threonine 175) is a Phosphothreonine. A PEST-like region spans residues histidine 231–histidine 251.

This sequence belongs to the BZR/LAT61 family. As to quaternary structure, interacts with ASK7/BIN2 through its C-terminal domain and with the bHLH transcription factors BIM1, BIM2 and BIM3 through its C- and N-terminal domains. Interacts (via N-terminus) with REF6 and ELF6. Interacts with MYB30. Interacts with IWS1. Interacts with ASHH2/SDG8. Binds to MYB56 when dephosphorylated in the nucleus of quiescent center (QC) cells. Binds to WRKY46, WRKY54 and WRKY70 to cooperatively regulate the expression of target genes. In terms of processing, phosphorylated by ASK7/BIN2. Phosphorylation increases protein degradation and/or interferes with the nuclear localization. In terms of tissue distribution, ubiquitously expressed in cotyledons, leaves, hypocotyls and roots.

It localises to the nucleus. The protein localises to the cytoplasm. Positive regulator of brassinosteroid (BR) signaling. Transcription factor that activates target gene expression by binding specifically to the DNA sequence 5'-CANNTG-3'(E box) through its N-terminal domain. Can bind individually to the promoter as a homodimer or synergistically as a heterodimer with BIM1, BIM2 or BIM3. The C-terminal domain is probably involved in transcriptional activation. Recruits the transcription elongation factor IWS1 to control BR-regulated gene expression. Forms a trimeric complex with IWS1 and ASHH2/SDG8 to regulate BR-regulated gene expression. Promotes quiescent center (QC) self-renewal by cell divisions in the primary root. Binds to the E-boxes of the BRAVO promoter to repress its expression. The sequence is that of Protein BRASSINAZOLE-RESISTANT 2 from Arabidopsis thaliana (Mouse-ear cress).